Reading from the N-terminus, the 235-residue chain is Transcriptional regulatory protein WalR (235 aa).

One can recognise a Response regulatory domain in the interval 4–117 (KILVVDDEKP…ELLARVKANL (114 aa)). A 4-aspartylphosphate modification is found at Asp53. Residues 132 to 231 (SNEIHIGSLV…RRGVGYYLRN (100 aa)) constitute a DNA-binding region (ompR/PhoB-type).

In terms of assembly, homodimer. Post-translationally, phosphorylated by WalK.

The protein resides in the cytoplasm. Its function is as follows. Member of the two-component regulatory system WalK/WalR involved in the regulation of the ftsAZ operon, the yocH, ykvT, cwlO, lytE, ydjM, yjeA, yoeB genes and the tagAB and tagDEF operons. Binds to the ftsAZ P1 promoter sequence in vitro. WalR has been shown to directly bind to the regulatory regions of yocH, ykvT, tagAB/tagDEF. Activates cwlO, lytE and ydjM and represses yoeB and yjeA. The protein is Transcriptional regulatory protein WalR of Bacillus subtilis (strain 168).